The sequence spans 114 residues: Protachykinin (114 aa).

A signal peptide spans Met1–Gly19. Residues Glu20–Thr55 constitute a propeptide that is removed on maturation. Residues Met67 and Met91 each carry the methionine amide modification.

The protein belongs to the tachykinin family. In terms of tissue distribution, expressed in all parts of the brain, with robust expression in the olfactory bulbs and tracts, moderate expression in the hypothalamus and posterior brain, and weak expression in the telencephalon-preoptic region and optic tectum-thalamus. Also expressed in nerve fibers, intestine, testes and pituitary gland. Not expressed in the liver or kidneys.

The protein resides in the secreted. Tachykinins are active peptides which excite neurons, evoke behavioral responses, are potent vasodilators and secretagogues, and contract (directly or indirectly) many smooth muscles. Functionally, substance P produces a voltage-dependent inhibition of calcium current in retinal bipolar cells. It can enhance learning and memory, may regulate social approach and feeding behaviors, and can accelerate the functional recovery in postural balance in response to light after unilateral labyrinthectomy. The chain is Protachykinin from Carassius auratus (Goldfish).